The following is a 133-amino-acid chain: UPF0292 protein TK1411 (133 aa).

In terms of domain architecture, Toprim spans 20 to 100 (EGALIVEGLR…SVDIETWKEL (81 aa)). Mg(2+) is bound by residues Glu-26, Asp-69, and Asp-71.

It belongs to the UPF0292 family. Mg(2+) is required as a cofactor.

The protein is UPF0292 protein TK1411 of Thermococcus kodakarensis (strain ATCC BAA-918 / JCM 12380 / KOD1) (Pyrococcus kodakaraensis (strain KOD1)).